The sequence spans 455 residues: N(5)-hydroxyornithine:cis-anhydromevalonyl coenzyme A-N(5)-transacylase SIDF (455 aa).

The PTS1-type peroxisomal targeting signal motif lies at 453–455 (PKL).

This sequence belongs to the lysine N-acyltransferase mbtK family.

The protein localises to the peroxisome. Its pathway is siderophore biosynthesis. In terms of biological role, hydroxyornithine transacylase; part of the gene cluster that mediates the biosynthesis of at least 11 siderophores, including beauverichelin A, dimerumic acid (DA), Na-dimethyl coprogen (NADC), eleutherazine B, ferricrocin (FC), fusarinine A, fusarinine C (FsC), metachelin A, mevalonolactone, rhodotorulic acid (RA) and tenellin. This cocktail of siderophores for iron metabolism is essential for virulence, and more specifically for the fungal virulence in penetrating through the host cuticle. Siderophore synthesis is also involved in conidial germination under iron-deficient conditions. For biosynthesis of fusarinine C, the transacylase SIDF transfers anhydromevalonyl to N(5)-hydroxyornithine. The required anhydromevalonyl-CoA moiety is derived from mevalonate by CoA ligation and dehydration catalyzed by SIDI and sidH respectively. The sequence is that of N(5)-hydroxyornithine:cis-anhydromevalonyl coenzyme A-N(5)-transacylase SIDF from Beauveria bassiana (strain ARSEF 2860) (White muscardine disease fungus).